The sequence spans 235 residues: Probable ribosomal RNA small subunit methyltransferase A (235 aa).

6 residues coordinate S-adenosyl-L-methionine: H9, L11, G34, E55, D78, and N93.

It belongs to the class I-like SAM-binding methyltransferase superfamily. rRNA adenine N(6)-methyltransferase family. RsmA subfamily.

The protein resides in the cytoplasm. In terms of biological role, specifically dimethylates two adjacent adenosines in the loop of a conserved hairpin near the 3'-end of 16S rRNA in the 30S particle. May play a critical role in biogenesis of 30S subunits. In Pyrobaculum islandicum (strain DSM 4184 / JCM 9189 / GEO3), this protein is Probable ribosomal RNA small subunit methyltransferase A.